Consider the following 338-residue polypeptide: Glycerol-3-phosphate dehydrogenase [NAD(P)+] (338 aa).

NADPH-binding residues include tryptophan 12, histidine 33, and lysine 110. Sn-glycerol 3-phosphate is bound by residues lysine 110, glycine 142, and serine 144. Alanine 146 serves as a coordination point for NADPH. Sn-glycerol 3-phosphate-binding residues include lysine 197, aspartate 250, serine 260, arginine 261, and asparagine 262. Catalysis depends on lysine 197, which acts as the Proton acceptor. Arginine 261 provides a ligand contact to NADPH. 2 residues coordinate NADPH: valine 286 and glutamate 288.

Belongs to the NAD-dependent glycerol-3-phosphate dehydrogenase family.

Its subcellular location is the cytoplasm. The enzyme catalyses sn-glycerol 3-phosphate + NAD(+) = dihydroxyacetone phosphate + NADH + H(+). The catalysed reaction is sn-glycerol 3-phosphate + NADP(+) = dihydroxyacetone phosphate + NADPH + H(+). It participates in membrane lipid metabolism; glycerophospholipid metabolism. Functionally, catalyzes the reduction of the glycolytic intermediate dihydroxyacetone phosphate (DHAP) to sn-glycerol 3-phosphate (G3P), the key precursor for phospholipid synthesis. This Acidobacterium capsulatum (strain ATCC 51196 / DSM 11244 / BCRC 80197 / JCM 7670 / NBRC 15755 / NCIMB 13165 / 161) protein is Glycerol-3-phosphate dehydrogenase [NAD(P)+].